The chain runs to 642 residues: Zinc finger protein 14 (642 aa).

Residues 4–76 (VSFEDVAVNF…MVERLCESRK (73 aa)) form the KRAB domain. The C2H2-type 1 zinc finger occupies 103–125 (HECSFCGRDFMHHSSLNRHMRSH). A C2H2-type 2; degenerate zinc finger spans residues 141–163 (RKHKAVEKTFSYHHCFRKHERTH). A C2H2-type 3 zinc finger spans residues 169–191 (YECKQCGKAFIYYQPFQRHERTH). Residues 197–217 (YECKQCGKTFIYYQSFQQHAH) form a C2H2-type 4; atypical zinc finger. 15 C2H2-type zinc fingers span residues 223–245 (YECKQCGKAFICYQSFQRHERTH), 251–273 (YECKQCGKAFSCPTYFRTHERTH), 279–301 (YKCKECGKAFSFLSSFRRHKRTH), 307–329 (YECKECGKAFFYSASFRAHVITH), 335–357 (YKCKECGKAFNSSNSCRVHERTH), 363–385 (YECKQCGKSFSWSISLRLHERTH), 391–413 (YECKQCHKTFSFSSSLREHETTH), 419–441 (YECKQCGKTFSFSSSLQRHERTH), 447–469 (YECKQCGKAFRCSSYFRIHERSH), 475–497 (YECKQCGKVFIRSSSFRLHERTH), 503–525 (YECKLCSKTFSFSSSLREHEKIH), 531–553 (FECKQCGKAFLRSSQIRLHERTH), 559–581 (YQCKQCGKAFISSSKFRMHERTH), 587–609 (YRCKQCGKAFRFSSSVRIHERSH), and 615–637 (YECKQCGKAFISSSHFRLHERTH).

It belongs to the krueppel C2H2-type zinc-finger protein family.

The protein resides in the nucleus. May be involved in transcriptional regulation. The sequence is that of Zinc finger protein 14 (ZNF14) from Pongo abelii (Sumatran orangutan).